The sequence spans 274 residues: Transmembrane protein 106B (274 aa).

A compositionally biased stretch (low complexity) spans 1-11 (MGKSLSHLPLH). A disordered region spans residues 1–20 (MGKSLSHLPLHSSKEDAYDG). Gly2 carries the N-myristoyl glycine lipid modification. Residues 2-96 (GKSLSHLPLH…QRLRPRRTKL (95 aa)) are Cytoplasmic-facing. Ser33 is modified (phosphoserine). The helical transmembrane segment at 97–117 (YVMASVFVCLLLSGLAVFFLF) threads the bilayer. The Lumenal segment spans residues 118–274 (PRSIDVKYIG…EYLNVLQPQQ (157 aa)). Residues Asn145, Asn151, Asn164, and Asn183 are each glycosylated (N-linked (GlcNAc...) asparagine). A disulfide bridge connects residues Cys214 and Cys253. Asn256 carries an N-linked (GlcNAc...) asparagine glycan.

It belongs to the TMEM106 family. As to quaternary structure, can form homomers. Interacts (via N-terminus) with MAP6 (via C-terminus). Interacts (via C-terminus) with the vacuolar-type ATPase subunit ATP6AP1. Interacts (via N-terminus) with AP2M1 and CLTC. Interacts with TMEM106C. In terms of assembly, (Microbial infection) Interacts with SARS coronavirus-2/SARS-CoV-2 spike protein (via RBD domain). Expressed in the brain, including in the frontal cortex (at protein level). Expressed in lung epithelial cells.

It localises to the late endosome membrane. Its subcellular location is the lysosome membrane. The protein resides in the cell membrane. Functionally, in neurons, involved in the transport of late endosomes/lysosomes. May be involved in dendrite morphogenesis and maintenance by regulating lysosomal trafficking. May act as a molecular brake for retrograde transport of late endosomes/lysosomes, possibly via its interaction with MAP6. In motoneurons, may mediate the axonal transport of lysosomes and axonal sorting at the initial segment. It remains unclear whether TMEM106B affects the transport of moving lysosomes in the anterograde or retrograde direction in neurites and whether it is important in the sorting of lysosomes in axons or in dendrites. In neurons, may also play a role in the regulation of lysosomal size and responsiveness to stress. Required for proper lysosomal acidification. In terms of biological role, (Microbial infection) Plays a role in human coronavirus SARS-CoV-2 infection, but not in common cold coronaviruses HCoV-229E and HCoV-OC43 infections. Involved in ACE2-independent SARS-CoV-2 cell entry. Required for post-endocytic stage of virus entry, facilitates spike-mediated membrane fusion. Virus attachment and endocytosis can also be mediated by other cell surface receptors. The polypeptide is Transmembrane protein 106B (Homo sapiens (Human)).